The following is a 127-amino-acid chain: Large ribosomal subunit protein bL17 (127 aa).

It belongs to the bacterial ribosomal protein bL17 family. In terms of assembly, part of the 50S ribosomal subunit. Contacts protein L32.

This chain is Large ribosomal subunit protein bL17, found in Xanthomonas axonopodis pv. citri (strain 306).